The sequence spans 197 residues: ADP-ribosylation factor 1 (197 aa).

Gly-2 carries the N-myristoyl glycine lipid modification. GTP-binding positions include 24 to 31 (GLDAAGKT), 67 to 71 (DVGGQ), and 126 to 129 (NKQD).

This sequence belongs to the small GTPase superfamily. Arf family.

Its subcellular location is the golgi apparatus. It carries out the reaction GTP + H2O = GDP + phosphate + H(+). In terms of biological role, GTP-binding protein involved in protein trafficking; may modulate vesicle budding and uncoating within the Golgi apparatus. The chain is ADP-ribosylation factor 1 from Solanum tuberosum (Potato).